Reading from the N-terminus, the 335-residue chain is Fimbrial adhesin PapGI (335 aa).

A signal peptide spans 1–21 (MKKWFPAFLFLSLSGGNDALA).

This sequence belongs to the adhesin PapG family. As to quaternary structure, interacts with chaperone PapD. Assembly of the P pilus requires periplasmic chaperone PapD, in absence of the chaperone overexpression of this subunit is toxic, where the protein accumulates in the periplasm. PapD stimulates release of PapG from an inner membrane-associated form (where at least 1 disulfide bond can form) into the periplasm and also helps it achieve its correct digalactoside-binding conformation. Contains disulfide bonds.

Its subcellular location is the secreted. It is found in the fimbrium. In terms of biological role, tip adhesin component of type P pili that binds preferentially to host cell glycosphingolipids such as globotriaosylceramide. The polypeptide is Fimbrial adhesin PapGI (Escherichia coli).